A 38-amino-acid chain; its full sequence is Photosystem II reaction center protein Y (38 aa).

Residues 2–20 traverse the membrane as a helical segment; that stretch reads ILIVLLPILLAATWAFINI.

The protein belongs to the PsbY family. In terms of assembly, PSII is composed of 1 copy each of membrane proteins PsbA, PsbB, PsbC, PsbD, PsbE, PsbF, PsbH, PsbI, PsbJ, PsbK, PsbL, PsbM, PsbT, PsbX, PsbY, Psb30/Ycf12, peripheral proteins PsbO, CyanoQ (PsbQ), PsbU, PsbV and a large number of cofactors. It forms dimeric complexes.

It localises to the cellular thylakoid membrane. Functionally, loosely associated component of the core of photosystem II (PSII), it is not always seen in crystals. PSII is a light-driven water plastoquinone oxidoreductase, using light energy to abstract electrons from H(2)O, generating a proton gradient subsequently used for ATP formation. The sequence is that of Photosystem II reaction center protein Y from Prochlorococcus marinus (strain MIT 9313).